A 406-amino-acid chain; its full sequence is Tyrosine--tRNA ligase (406 aa).

A 'HIGH' region motif is present at residues 48–57 (PSRPDLHLGH). Residues 232–236 (KMSKS) carry the 'KMSKS' region motif. Residue K235 coordinates ATP. Residues 339-401 (MPVVELLMAL…GKRKFFKVAR (63 aa)) enclose the S4 RNA-binding domain.

The protein belongs to the class-I aminoacyl-tRNA synthetase family. TyrS type 2 subfamily. Homodimer.

The protein localises to the cytoplasm. It catalyses the reaction tRNA(Tyr) + L-tyrosine + ATP = L-tyrosyl-tRNA(Tyr) + AMP + diphosphate + H(+). Functionally, catalyzes the attachment of tyrosine to tRNA(Tyr) in a two-step reaction: tyrosine is first activated by ATP to form Tyr-AMP and then transferred to the acceptor end of tRNA(Tyr). In Chlorobaculum tepidum (strain ATCC 49652 / DSM 12025 / NBRC 103806 / TLS) (Chlorobium tepidum), this protein is Tyrosine--tRNA ligase.